The sequence spans 315 residues: Protein rlx (315 aa).

Positions 263–315 (TEQLKQRRVERAQETKQAHSKISSRDTRESENQRERAKGNNIRIERGDEGLSR) are disordered.

In terms of biological role, this protein is probably required for relaxation complex formation and plasmid mobilization by conjugative plasmids. The sequence is that of Protein rlx (rlx) from Staphylococcus aureus.